The sequence spans 122 residues: Large ribosomal subunit protein uL14 (122 aa).

This sequence belongs to the universal ribosomal protein uL14 family. As to quaternary structure, part of the 50S ribosomal subunit. Forms a cluster with proteins L3 and L19. In the 70S ribosome, L14 and L19 interact and together make contacts with the 16S rRNA in bridges B5 and B8.

Its function is as follows. Binds to 23S rRNA. Forms part of two intersubunit bridges in the 70S ribosome. The chain is Large ribosomal subunit protein uL14 from Paraburkholderia phymatum (strain DSM 17167 / CIP 108236 / LMG 21445 / STM815) (Burkholderia phymatum).